A 153-amino-acid chain; its full sequence is Large ribosomal subunit protein uL15 (153 aa).

The segment at 1-49 is disordered; it reads MQLHNLYPFPEERKTRRRVGRGSGSGLGCTAGKGHKGQNARAGGGVAPG. A compositionally biased stretch (gly residues) spans 21-31; it reads RGSGSGLGCTA.

Belongs to the universal ribosomal protein uL15 family. In terms of assembly, part of the 50S ribosomal subunit.

Binds to the 23S rRNA. The polypeptide is Large ribosomal subunit protein uL15 (Desulfovibrio desulfuricans (strain ATCC 27774 / DSM 6949 / MB)).